Here is a 150-residue protein sequence, read N- to C-terminus: MQIILLEKVANLGNLGDIVKVKDGYARNFLIPNRKARRATKEAIAEFEVRRAELEKIAAEKLAASQAVGEKLNGQSFEITQKSGVDGRLFGSVTNGDVAELLKKAGYEVEKLQVRMPEGPLKMIGEHNVQVALHTDVVVDVTINVIGDHA.

This sequence belongs to the bacterial ribosomal protein bL9 family.

In terms of biological role, binds to the 23S rRNA. This chain is Large ribosomal subunit protein bL9, found in Burkholderia cenocepacia (strain HI2424).